Here is a 514-residue protein sequence, read N- to C-terminus: WD repeat-containing protein 26 (514 aa).

Positions 9-84 (EHPSATKFRN…EYLEDGKVLE (76 aa)) constitute a CTLH domain. WD repeat units follow at residues 206–245 (EHCN…HLLK), 252–291 (GHAY…GELR), 297–337 (SHED…DSWE), 377–416 (QEDH…LVRK), 419–461 (GVTQ…PIAE), and 464–504 (GHTR…DHQN).

Forms homooligomers. Identified in the CTLH complex that contains GID4, RANBP9 and/or RANBP10, MKLN1, MAEA, RMND5A (or alternatively its paralog RMND5B), GID8, ARMC8, WDR26 and YPEL5. Within this complex, MAEA, RMND5A (or alternatively its paralog RMND5B), GID8, WDR26, and RANBP9 and/or RANBP10 form the catalytic core, while GID4, MKLN1, ARMC8 and YPEL5 have ancillary roles. Interacts with DDB1-CUL4A/B E3 ligase complexes. Forms a complex composed of at least WDR26, a G-beta:gamma unit, and PLCB2. Interacts with AXIN1.

It localises to the cytoplasm. Its subcellular location is the nucleus. The protein resides in the mitochondrion. G-beta-like protein involved in cell signal transduction. Acts as a negative regulator in MAPK signaling pathway. Functions as a scaffolding protein to promote G beta:gamma-mediated PLCB2 plasma membrane translocation and subsequent activation in leukocytes. Core component of the CTLH E3 ubiquitin-protein ligase complex that selectively accepts ubiquitin from UBE2H and mediates ubiquitination and subsequent proteasomal degradation of the transcription factor HBP1. Acts as a negative regulator of the canonical Wnt signaling pathway through preventing ubiquitination of beta-catenin CTNNB1 by the beta-catenin destruction complex, thus negatively regulating CTNNB1 degradation. Protects cells from oxidative stress-induced apoptosis via the down-regulation of AP-1 transcriptional activity as well as by inhibiting cytochrome c release from mitochondria. Also protects cells by promoting hypoxia-mediated autophagy and mitophagy. In Rattus norvegicus (Rat), this protein is WD repeat-containing protein 26 (Wdr26).